The chain runs to 294 residues: 33 kDa chaperonin (294 aa).

Cystine bridges form between C238/C240 and C271/C274.

This sequence belongs to the HSP33 family. Under oxidizing conditions two disulfide bonds are formed involving the reactive cysteines. Under reducing conditions zinc is bound to the reactive cysteines and the protein is inactive.

It is found in the cytoplasm. Functionally, redox regulated molecular chaperone. Protects both thermally unfolding and oxidatively damaged proteins from irreversible aggregation. Plays an important role in the bacterial defense system toward oxidative stress. The sequence is that of 33 kDa chaperonin from Caldanaerobacter subterraneus subsp. tengcongensis (strain DSM 15242 / JCM 11007 / NBRC 100824 / MB4) (Thermoanaerobacter tengcongensis).